The chain runs to 293 residues: Fructose-bisphosphate aldolase (293 aa).

Residue serine 50 participates in D-glyceraldehyde 3-phosphate binding. The active-site Proton donor is the aspartate 85. Residues histidine 86, aspartate 106, glutamate 136, and histidine 178 each contribute to the Zn(2+) site. Glycine 179 is a dihydroxyacetone phosphate binding site. Histidine 208 serves as a coordination point for Zn(2+). Dihydroxyacetone phosphate-binding positions include 209 to 211 and 230 to 233; these read GGS and NVNT.

This sequence belongs to the class II fructose-bisphosphate aldolase family. Zn(2+) serves as cofactor.

It carries out the reaction beta-D-fructose 1,6-bisphosphate = D-glyceraldehyde 3-phosphate + dihydroxyacetone phosphate. It participates in carbohydrate degradation; glycolysis; D-glyceraldehyde 3-phosphate and glycerone phosphate from D-glucose: step 4/4. Its function is as follows. Catalyzes the aldol condensation of dihydroxyacetone phosphate (DHAP or glycerone-phosphate) with glyceraldehyde 3-phosphate (G3P) to form fructose 1,6-bisphosphate (FBP) in gluconeogenesis and the reverse reaction in glycolysis. This is Fructose-bisphosphate aldolase (fba) from Streptococcus pyogenes serotype M6 (strain ATCC BAA-946 / MGAS10394).